Here is a 387-residue protein sequence, read N- to C-terminus: Migration and invasion-inhibitory protein (387 aa).

Positions 50 to 59 (NLEMPLSQET) are enriched in polar residues. Disordered stretches follow at residues 50 to 80 (NLEMPLSQETSSASSVAPSSQDKRHMLDPLD) and 133 to 172 (VSLGGPKGLGPDKTQVPRSILSRLSKPSKPRVTSQESAVP). Residues 60–69 (SSASSVAPSS) show a composition bias toward low complexity. A compositionally biased stretch (basic and acidic residues) spans 70–80 (QDKRHMLDPLD). The residue at position 307 (Ser-307) is a Phosphoserine.

As to quaternary structure, interacts with IGFBP2.

Functionally, inhibits glioma cells invasion and down-regulates adhesion- and motility-associated genes such as NFKB2 and ICAM1. Exhibits opposing effects to IGFBP2 on cell invasion. This Mus musculus (Mouse) protein is Migration and invasion-inhibitory protein (Miip).